A 421-amino-acid polypeptide reads, in one-letter code: Replication factor C large subunit (421 aa).

Gly63 to Thr70 provides a ligand contact to ATP.

The protein belongs to the activator 1 small subunits family. RfcL subfamily. As to quaternary structure, heteromultimer composed of small subunits (RfcS) and large subunits (RfcL).

Part of the RFC clamp loader complex which loads the PCNA sliding clamp onto DNA. This is Replication factor C large subunit from Pyrobaculum calidifontis (strain DSM 21063 / JCM 11548 / VA1).